Consider the following 365-residue polypeptide: Peptide chain release factor 2 (365 aa).

Residue glutamine 251 is modified to N5-methylglutamine.

This sequence belongs to the prokaryotic/mitochondrial release factor family. Methylated by PrmC. Methylation increases the termination efficiency of RF2.

It localises to the cytoplasm. Its function is as follows. Peptide chain release factor 2 directs the termination of translation in response to the peptide chain termination codons UGA and UAA. This chain is Peptide chain release factor 2, found in Campylobacter jejuni subsp. jejuni serotype O:23/36 (strain 81-176).